A 309-amino-acid chain; its full sequence is Porphobilinogen deaminase (309 aa).

Cys243 carries the S-(dipyrrolylmethanemethyl)cysteine modification.

Belongs to the HMBS family. As to quaternary structure, monomer. Dipyrromethane serves as cofactor.

The enzyme catalyses 4 porphobilinogen + H2O = hydroxymethylbilane + 4 NH4(+). Its pathway is porphyrin-containing compound metabolism; protoporphyrin-IX biosynthesis; coproporphyrinogen-III from 5-aminolevulinate: step 2/4. In terms of biological role, tetrapolymerization of the monopyrrole PBG into the hydroxymethylbilane pre-uroporphyrinogen in several discrete steps. The protein is Porphobilinogen deaminase (hemC) of Deinococcus radiodurans (strain ATCC 13939 / DSM 20539 / JCM 16871 / CCUG 27074 / LMG 4051 / NBRC 15346 / NCIMB 9279 / VKM B-1422 / R1).